A 403-amino-acid chain; its full sequence is Phosphoglycerate kinase (403 aa).

Substrate-binding positions include 21–23, Arg-36, 59–62, Arg-119, and Arg-159; these read DFN and HLGR. ATP is bound by residues Lys-214, Gly-301, Glu-332, and 359-362; that span reads GGDS.

The protein belongs to the phosphoglycerate kinase family. Monomer.

The protein resides in the cytoplasm. It catalyses the reaction (2R)-3-phosphoglycerate + ATP = (2R)-3-phospho-glyceroyl phosphate + ADP. Its pathway is carbohydrate degradation; glycolysis; pyruvate from D-glyceraldehyde 3-phosphate: step 2/5. This chain is Phosphoglycerate kinase, found in Lactobacillus gasseri (strain ATCC 33323 / DSM 20243 / BCRC 14619 / CIP 102991 / JCM 1131 / KCTC 3163 / NCIMB 11718 / NCTC 13722 / AM63).